The chain runs to 180 residues: Small ribosomal subunit protein uS4 (180 aa).

Residues 104–166 (RRLQTIVHRK…PTSPFKNNPP (63 aa)) form the S4 RNA-binding domain. The tract at residues 155 to 180 (FYPTSPFKNNPPTAGQGEVNVEQKGN) is disordered.

This sequence belongs to the universal ribosomal protein uS4 family. As to quaternary structure, part of the 30S ribosomal subunit. Contacts protein S5. The interaction surface between S4 and S5 is involved in control of translational fidelity.

One of the primary rRNA binding proteins, it binds directly to 16S rRNA where it nucleates assembly of the body of the 30S subunit. Its function is as follows. With S5 and S12 plays an important role in translational accuracy. In Metallosphaera sedula (strain ATCC 51363 / DSM 5348 / JCM 9185 / NBRC 15509 / TH2), this protein is Small ribosomal subunit protein uS4.